A 139-amino-acid chain; its full sequence is Tol-Pal system protein TolR (139 aa).

The helical transmembrane segment at 15-35 (IVPFLDVLLVLVLIFMATAPI) threads the bilayer.

The protein belongs to the ExbD/TolR family. In terms of assembly, the Tol-Pal system is composed of five core proteins: the inner membrane proteins TolA, TolQ and TolR, the periplasmic protein TolB and the outer membrane protein Pal. They form a network linking the inner and outer membranes and the peptidoglycan layer.

Its subcellular location is the cell inner membrane. In terms of biological role, part of the Tol-Pal system, which plays a role in outer membrane invagination during cell division and is important for maintaining outer membrane integrity. This Haemophilus influenzae (strain ATCC 51907 / DSM 11121 / KW20 / Rd) protein is Tol-Pal system protein TolR.